The chain runs to 236 residues: Purine nucleoside phosphorylase DeoD-type (236 aa).

Histidine 4 serves as a coordination point for a purine D-ribonucleoside. Residues glycine 20, arginine 24, arginine 43, and 87-90 (RVGT) contribute to the phosphate site. Residues 179-181 (EME) and 203-204 (SD) contribute to the a purine D-ribonucleoside site. Aspartate 204 acts as the Proton donor in catalysis.

It belongs to the PNP/UDP phosphorylase family. Homohexamer; trimer of homodimers.

The catalysed reaction is a purine D-ribonucleoside + phosphate = a purine nucleobase + alpha-D-ribose 1-phosphate. It catalyses the reaction a purine 2'-deoxy-D-ribonucleoside + phosphate = a purine nucleobase + 2-deoxy-alpha-D-ribose 1-phosphate. In terms of biological role, catalyzes the reversible phosphorolytic breakdown of the N-glycosidic bond in the beta-(deoxy)ribonucleoside molecules, with the formation of the corresponding free purine bases and pentose-1-phosphate. The sequence is that of Purine nucleoside phosphorylase DeoD-type from Streptococcus pneumoniae (strain CGSP14).